We begin with the raw amino-acid sequence, 72 residues long: Translational regulator CsrA (72 aa).

It belongs to the CsrA/RsmA family. In terms of assembly, homodimer; the beta-strands of each monomer intercalate to form a hydrophobic core, while the alpha-helices form wings that extend away from the core.

The protein resides in the cytoplasm. Functionally, a translational regulator that binds mRNA to regulate translation initiation and/or mRNA stability. Usually binds in the 5'-UTR at or near the Shine-Dalgarno sequence preventing ribosome-binding, thus repressing translation. Its main target seems to be the major flagellin gene, while its function is anatagonized by FliW. The polypeptide is Translational regulator CsrA (Agathobacter rectalis (strain ATCC 33656 / DSM 3377 / JCM 17463 / KCTC 5835 / VPI 0990) (Eubacterium rectale)).